Here is a 585-residue protein sequence, read N- to C-terminus: Arginine--tRNA ligase (585 aa).

The 'HIGH' region motif lies at 131–141 (ANPTGPMHVGH).

The protein belongs to the class-I aminoacyl-tRNA synthetase family. Monomer.

The protein resides in the cytoplasm. The enzyme catalyses tRNA(Arg) + L-arginine + ATP = L-arginyl-tRNA(Arg) + AMP + diphosphate. The sequence is that of Arginine--tRNA ligase from Bartonella henselae (strain ATCC 49882 / DSM 28221 / CCUG 30454 / Houston 1) (Rochalimaea henselae).